The following is a 57-amino-acid chain: Large ribosomal subunit protein uL30 (57 aa).

The protein belongs to the universal ribosomal protein uL30 family. As to quaternary structure, part of the 50S ribosomal subunit.

This is Large ribosomal subunit protein uL30 from Clostridium acetobutylicum (strain ATCC 824 / DSM 792 / JCM 1419 / IAM 19013 / LMG 5710 / NBRC 13948 / NRRL B-527 / VKM B-1787 / 2291 / W).